Consider the following 271-residue polypeptide: N-acylmannosamine 1-dehydrogenase (271 aa).

20–44 (VTGAAGGIGRATVEAYLREGASVVA) lines the NAD(+) pocket. A substrate-binding site is contributed by Ser153. The Proton acceptor role is filled by Tyr166.

This sequence belongs to the short-chain dehydrogenases/reductases (SDR) family.

The enzyme catalyses an N-acyl-D-mannosamine + NAD(+) = an N-acyl-D-mannosaminolactone + NADH + H(+). Its function is as follows. Acts on acetyl-D-mannosamine and glycolyl-D-mannosamine. The protein is N-acylmannosamine 1-dehydrogenase of Flavobacterium sp. (strain 141-8).